Here is a 579-residue protein sequence, read N- to C-terminus: CTP synthase 1 (579 aa).

One can recognise a Glutamine amidotransferase type-1 domain in the interval 305–559 (KIALVGKYTN…LGLVAASAGI (255 aa)). The For GATase activity role is filled by cysteine 404. Residue lysine 422 forms a Glycyl lysine isopeptide (Lys-Gly) (interchain with G-Cter in ubiquitin) linkage. Active-site for GATase activity residues include histidine 535 and glutamate 537.

Belongs to the CTP synthase family. As to quaternary structure, homodimer. Oligomerizes to a tetramer in the presence of its substrates UTP and ATP.

It catalyses the reaction UTP + L-glutamine + ATP + H2O = CTP + L-glutamate + ADP + phosphate + 2 H(+). The protein operates within pyrimidine metabolism; CTP biosynthesis via de novo pathway; CTP from UDP: step 2/2. With respect to regulation, activated by GTP and inhibited by CTP. Its function is as follows. Catalyzes the ATP-dependent amination of UTP to CTP with either L-glutamine or ammonia as the source of nitrogen. This is CTP synthase 1 (URA7) from Saccharomyces cerevisiae (strain ATCC 204508 / S288c) (Baker's yeast).